We begin with the raw amino-acid sequence, 55 residues long: Potassium channel toxin alpha-KTX 12 Sp2 (55 aa).

Positions 1–18 are cleaved as a signal peptide; that stretch reads MRLAIILLLMTTIVLTIG. Intrachain disulfides connect Cys-26-Cys-46, Cys-32-Cys-51, and Cys-36-Cys-53.

This sequence belongs to the short scorpion toxin superfamily. Potassium channel inhibitor family. Alpha-KTx 12 subfamily. As to expression, expressed by the venom gland.

It is found in the secreted. Blocks mouse voltage-gated potassium channels Kv1.3/KCNA3 (IC(50)=0.3-30 nM), when the channel is expressed in Jurkat T cells or in HEK293 cells. Also shows a weaker inhibition on mKv1.2/KCNA2 (IC(50)=56.9 nM) and mKv1.1/KCNA1 (IC(50)=485 nM). Probably through the inhibition of both Kv1.2/KCNA2 and Kv1.3/KCNA3, the toxin also reduces the free calcium concentration in Jurkat T cells, inhibits the activation of Jurkat T cells and reduces the release of inflammatory cytokines interleukin-2, showing a strong immunosuppressant effect. This Scorpiops pococki (Scorpion) protein is Potassium channel toxin alpha-KTX 12 Sp2.